The chain runs to 95 residues: UPF0235 protein Adeh_1087 (95 aa).

The protein belongs to the UPF0235 family.

This Anaeromyxobacter dehalogenans (strain 2CP-C) protein is UPF0235 protein Adeh_1087.